The following is an 839-amino-acid chain: MTLTRRDFIKANAAAAAATAAAVNLPLVPSMAQAATTDPATAGADIKWDKAACRFCGTGCSVLVGTKGGRVVATQGDPDAPVNRGLNCIKGYFLSKIMYGEDRLTKPLLRMKNGKFDKNGEFTPVTWKQAFDVMEEKFKTAMKAGGPEAVAMFGSGQWTIWEGYAAAKFMKAGLRSNNLDPNARHCMASAVVGFMRTFNMDEPMGCYDDIEKADAFVLWGSNMAEMHPILWSRITDRRLTHPDCQVHVLSTYEHRSFELADNKLVFGPQTDLAILNYIANHIIQTGAVNKDFIQKYCAFMKGDTDIGYGLRPTHPKQKAAKNPDSGKMDPITFEQFAAFVKPYTLEYTARTSCVPAERLKRLAELYADPKKKVVSFWTMGFNQHTRGTWANNLVYNIHLLTGKISTPGCGPFSLTGQPSACGTAREVGTFAHRLPADLVVMNPEHRKIAENIWKLPEGTIPPKMGLHAVAMQRALKDSKLKVYWQQCNNNMQAGPNINEEMYPGWRNPETFIIVSDPYPTVSAMAADLILPTAMWVEKEGAYGNAERRTQFWRQQVNAPGEAKSDLWQVVEFSKRFKVEEVWPAELVAKKPEYRGKTLYDVLFANGQVNKYKLDDMARQHGTAYHNEEARHVGFYLQKGLFEEYAAFGRGHGHDLALFDTYHKARGLRWPVVDGKETLWRYREGFDPYVKKGEGVRFYGQKDGRARIIALPFEPAAEVPDREYNMWLCTGRVLEHWHTGSMTRRVPELYRAVPDAQVFMHPADAELRGLKRGQQVKVISRRGEITLTLETRGRNKPPQGLVFIPFFDEGRLVNKLTLDATCPLSKETDYKKCAVKVVRA.

The tat-type signal signal peptide spans Met-1–Ala-34. The region spanning Ile-46 to Asp-102 is the 4Fe-4S Mo/W bis-MGD-type domain. [4Fe-4S] cluster is bound by residues Cys-53, Cys-56, Cys-60, and Cys-88. Residues Lys-90, Gln-157, Asn-182, Cys-186, Trp-219–Met-226, Ser-250–His-254, Gln-269–Asp-271, Met-379, Gln-383, Asn-489, Ser-515–Asp-516, Lys-538, Asp-565, and Thr-729–Thr-738 each bind Mo-bis(molybdopterin guanine dinucleotide). Substrate is bound at residue Phe-805. Mo-bis(molybdopterin guanine dinucleotide) contacts are provided by Asn-813 and Lys-830.

The protein belongs to the prokaryotic molybdopterin-containing oxidoreductase family. NasA/NapA/NarB subfamily. In terms of assembly, component of the periplasmic nitrate reductase NapAB complex composed of NapA and NapB. Requires [4Fe-4S] cluster as cofactor. It depends on Mo-bis(molybdopterin guanine dinucleotide) as a cofactor. Predicted to be exported by the Tat system. The position of the signal peptide cleavage has not been experimentally proven.

It localises to the periplasm. It catalyses the reaction 2 Fe(II)-[cytochrome] + nitrate + 2 H(+) = 2 Fe(III)-[cytochrome] + nitrite + H2O. Functionally, catalytic subunit of the periplasmic nitrate reductase complex NapAB. Receives electrons from NapB and catalyzes the reduction of nitrate to nitrite. The protein is Periplasmic nitrate reductase of Laribacter hongkongensis (strain HLHK9).